The primary structure comprises 355 residues: NADH-quinone oxidoreductase subunit H (355 aa).

The next 8 membrane-spanning stretches (helical) occupy residues 25-45 (LVRI…LILW), 91-111 (WLYL…WAVI), 126-146 (LLYA…AGWA), 170-190 (MGFA…SEIV), 205-225 (FLSW…VSGI), 253-273 (MAFA…SALA), 290-310 (FIPG…VFIW), and 330-350 (VFLP…MSPL).

The protein belongs to the complex I subunit 1 family. As to quaternary structure, NDH-1 is composed of 14 different subunits. Subunits NuoA, H, J, K, L, M, N constitute the membrane sector of the complex.

It is found in the cell inner membrane. The enzyme catalyses a quinone + NADH + 5 H(+)(in) = a quinol + NAD(+) + 4 H(+)(out). NDH-1 shuttles electrons from NADH, via FMN and iron-sulfur (Fe-S) centers, to quinones in the respiratory chain. The immediate electron acceptor for the enzyme in this species is believed to be ubiquinone. Couples the redox reaction to proton translocation (for every two electrons transferred, four hydrogen ions are translocated across the cytoplasmic membrane), and thus conserves the redox energy in a proton gradient. This subunit may bind ubiquinone. This Burkholderia vietnamiensis (strain G4 / LMG 22486) (Burkholderia cepacia (strain R1808)) protein is NADH-quinone oxidoreductase subunit H.